The primary structure comprises 375 residues: Ferredoxin--NADP reductase, root-type isozyme, chloroplastic (375 aa).

Residues M1 to M60 constitute a chloroplast transit peptide. One can recognise an FAD-binding FR-type domain in the interval K91–L219. FAD-binding positions include R151 to L154, C172 to R174, Y178, V193 to S195, and T235. NADP(+) is bound at residue R174. Residues T235, V266–A267, S296–R297, K306, G334–L335, and E373 each bind NADP(+).

This sequence belongs to the ferredoxin--NADP reductase type 1 family. Requires FAD as cofactor.

The protein resides in the plastid. It is found in the chloroplast. The enzyme catalyses 2 reduced [2Fe-2S]-[ferredoxin] + NADP(+) + H(+) = 2 oxidized [2Fe-2S]-[ferredoxin] + NADPH. It participates in energy metabolism; photosynthesis. In terms of biological role, may play a key role in regulating the relative amounts of cyclic and non-cyclic electron flow to meet the demands of the plant for ATP and reducing power. Is involved in nitrate assimilation. This is Ferredoxin--NADP reductase, root-type isozyme, chloroplastic from Nicotiana tabacum (Common tobacco).